The sequence spans 431 residues: Adenylosuccinate synthetase (431 aa).

Residues 12–18 and 40–42 each bind GTP; these read GDEGKGK and GHS. The active-site Proton acceptor is the Asp13. Positions 13 and 40 each coordinate Mg(2+). IMP is bound by residues 13–16 and 38–41; these read DEGK and NAGH. His41 acts as the Proton donor in catalysis. The segment at 114 to 133 is disordered; it reads QQQERDRSKNGEKIGTTNKG. Over residues 115–125 the composition is skewed to basic and acidic residues; sequence QQERDRSKNGE. Residues Thr130, Arg144, Gln225, Thr240, and Arg304 each contribute to the IMP site. A substrate-binding site is contributed by 300-306; that stretch reads TVTKRPR. GTP contacts are provided by residues Arg306, 332–334, and 414–416; these read CLD and SIG.

Belongs to the adenylosuccinate synthetase family. Homodimer. It depends on Mg(2+) as a cofactor.

It localises to the cytoplasm. The enzyme catalyses IMP + L-aspartate + GTP = N(6)-(1,2-dicarboxyethyl)-AMP + GDP + phosphate + 2 H(+). It functions in the pathway purine metabolism; AMP biosynthesis via de novo pathway; AMP from IMP: step 1/2. Its function is as follows. Plays an important role in the de novo pathway of purine nucleotide biosynthesis. Catalyzes the first committed step in the biosynthesis of AMP from IMP. This is Adenylosuccinate synthetase from Pediococcus pentosaceus (strain ATCC 25745 / CCUG 21536 / LMG 10740 / 183-1w).